Reading from the N-terminus, the 91-residue chain is Large ribosomal subunit protein bL31B (91 aa).

It belongs to the bacterial ribosomal protein bL31 family. Type B subfamily. In terms of assembly, part of the 50S ribosomal subunit.

The protein is Large ribosomal subunit protein bL31B of Neisseria meningitidis serogroup B (strain ATCC BAA-335 / MC58).